The chain runs to 229 residues: Golgi to ER traffic protein 1 (229 aa).

Residues 1–14 (MGILAALDLHPYTL) are Lumenal-facing. A helical transmembrane segment spans residues 15-34 (VVSSFTVLLIQQLVGFIGKS). Residues 35–122 (TIQEFAWLFY…KINSLVGVVL (88 aa)) lie on the Cytoplasmic side of the membrane. A coiled-coil region spans residues 60–117 (HTKKQEELHKLNREKRSISAQDEYAKWTKLNRQAEKLTAEVKSLSDDIAKDKSKINSL). The chain crosses the membrane as a helical span at residues 123–143 (LFLTTLPLWVFRLWFRKSVLF). Residues 144-167 (YLPTGVFPYYVERVLAIPFFASGS) lie on the Lumenal side of the membrane. Residues 168-184 (VGLTVWMFAVNNVISSV) traverse the membrane as a helical segment. Residues 185-229 (LFLLTFPFKPSVPIPIRQTKVEEVVPESAESKESSPEVIDIADAN) lie on the Cytoplasmic side of the membrane. The segment covering 210-219 (PESAESKESS) has biased composition (basic and acidic residues). The segment at 210–229 (PESAESKESSPEVIDIADAN) is disordered.

It belongs to the WRB/GET1 family. Component of the Golgi to ER traffic (GET) complex, which is composed of GET1, GET2 and GET3. Within the complex, GET1 and GET2 form a heterotetramer which is stabilized by phosphatidylinositol binding and which binds to the GET3 homodimer.

It localises to the endoplasmic reticulum membrane. It is found in the golgi apparatus membrane. Functionally, required for the post-translational delivery of tail-anchored (TA) proteins to the endoplasmic reticulum. Together with GET2, acts as a membrane receptor for soluble GET3, which recognizes and selectively binds the transmembrane domain of TA proteins in the cytosol. The GET complex cooperates with the HDEL receptor ERD2 to mediate the ATP-dependent retrieval of resident ER proteins that contain a C-terminal H-D-E-L retention signal from the Golgi to the ER. The protein is Golgi to ER traffic protein 1 of Scheffersomyces stipitis (strain ATCC 58785 / CBS 6054 / NBRC 10063 / NRRL Y-11545) (Yeast).